The following is a 636-amino-acid chain: MKKIYGEKIKAVVFDWAGTTVDYGCFAPLNVFIEIFKRRGIDVTMEEARKPMGKLKIDHIREMCEMDRIKNIWSDKFGKVPTEDDVNELYAEFEPMLFETLEEYTTPIPHVVETIEKLRKNGLKIGSTTGYTREMMNIVEPNAAKKGYSPDFLVTPSEVSQGRPYPWMCYKNAEALGVSPMSSMVKVGDTISDVKEGVNAGMWSVAVIKGSSELGLTQEEVENMDKEELKAKMSIVSKKFKEAGAHFVIETMAELEDILIKIENETIKSDFVPENDYILLTPGPLSTTKSVRASMLKDWCTWDVEYNNLVQDVRRRLVSLATQNTDKYTSVLMQGSGTFSVEAIIGSTISKDGKLLVIANGAYGKRMKDICNYLNIQFVDCTFKDIEAVDLNVVENLLKENKDITHISMVHCETTTGRLNPIQEVGKLAKEYNKIYIVDAMSSFGGIEIDVEDFNIDFLVSSSNKCIQGVPGFGFIIANKEELSKCKGIAKSLSLDVYAQWDTMEKNNGKWRFTSPTHVVRAFYQALLELEEEGSVEKRYARYKENQFTIASRLKSLGFDTLVNDNAQSPVITTFLYPKNAKFEFMEFYTYLKDNGFVIYPGKLTDIDTFRIGSIGEVYPTDMERLADVIEKFINR.

A phosphonoacetaldehyde hydrolase region spans residues 1–276 (MKKIYGEKIK…IKSDFVPEND (276 aa)). Residue aspartate 15 is the Nucleophile of the active site. Aspartate 15 and alanine 17 together coordinate Mg(2+). The active-site Schiff-base intermediate with substrate is lysine 56. Residue aspartate 189 coordinates Mg(2+). A 2-aminoethylphosphonate--pyruvate transaminase region spans residues 277–636 (YILLTPGPLS…ADVIEKFINR (360 aa)). Position 465 is an N6-(pyridoxal phosphate)lysine (lysine 465).

In the N-terminal section; belongs to the HAD-like hydrolase superfamily. PhnX family. The protein in the C-terminal section; belongs to the class-V pyridoxal-phosphate-dependent aminotransferase family. PhnW subfamily. In terms of assembly, homodimer. Mg(2+) is required as a cofactor. Pyridoxal 5'-phosphate serves as cofactor.

It carries out the reaction (2-aminoethyl)phosphonate + pyruvate = phosphonoacetaldehyde + L-alanine. The catalysed reaction is phosphonoacetaldehyde + H2O = acetaldehyde + phosphate + H(+). In terms of biological role, involved in phosphonate degradation. The chain is Bifunctional phosphonoacetaldehyde hydrolase/aminoethylphosphonate transaminase (phnXW) from Clostridioides difficile (strain 630) (Peptoclostridium difficile).